The chain runs to 300 residues: Protoheme IX farnesyltransferase (300 aa).

9 helical membrane-spanning segments follow: residues 24-44, 48-68, 94-114, 118-138, 146-166, 172-192, 217-237, 239-259, and 278-298; these read VTQL…PGMV, VLLG…AINC, LQIL…LYTF, LTMW…TLLL, IVIG…AVTG, AWIL…VLAL, LHIL…FISG, SGAV…AYAW, and IVYL…RPVI.

This sequence belongs to the UbiA prenyltransferase family. Protoheme IX farnesyltransferase subfamily.

It localises to the cell inner membrane. The enzyme catalyses heme b + (2E,6E)-farnesyl diphosphate + H2O = Fe(II)-heme o + diphosphate. It participates in porphyrin-containing compound metabolism; heme O biosynthesis; heme O from protoheme: step 1/1. Converts heme B (protoheme IX) to heme O by substitution of the vinyl group on carbon 2 of heme B porphyrin ring with a hydroxyethyl farnesyl side group. The protein is Protoheme IX farnesyltransferase of Burkholderia thailandensis (strain ATCC 700388 / DSM 13276 / CCUG 48851 / CIP 106301 / E264).